A 460-amino-acid chain; its full sequence is Ammonium transporter Rh type B-B (460 aa).

Residues 1–10 (MTSYSTNMRI) lie on the Cytoplasmic side of the membrane. Residues 11–31 (KLPLFCLLLQFITIILFAVFV) traverse the membrane as a helical segment. Topologically, residues 32–62 (RYDHESDARGWHEELNNHSSSNADNDFYYRY) are extracellular. An N-linked (GlcNAc...) asparagine glycan is attached at Asn-48. Residues 63-83 (PSFQDVHVMIFIGFGFLMTFL) traverse the membrane as a helical segment. Over 84 to 87 (KRYG) the chain is Cytoplasmic. The helical transmembrane segment at 88–108 (FSSVAFNFLIAAFGLQWSTLI) threads the bilayer. Residues 109–125 (QGFFHGFHDGKIHVGIE) are Extracellular-facing. A helical membrane pass occupies residues 126 to 146 (SMINADFCTGAVLISFGAVLG). Residues 147–150 (KTSP) are Cytoplasmic-facing. The helical transmembrane segment at 151–171 (VQLIIMTLVEVTLFGINEYII) threads the bilayer. Residues 172 to 179 (LNIVGAKD) lie on the Extracellular side of the membrane. The chain crosses the membrane as a helical span at residues 180 to 202 (AGGSMTIHTFGAYFGLIVSRVLY). Residues 203–220 (REDLEKSRQREGSVYHSD) lie on the Cytoplasmic side of the membrane. A helical transmembrane segment spans residues 221–241 (LFAMIGTIYLWMFWPSFNSAV). Over 242-252 (TAHGDDQHRTV) the chain is Extracellular. The chain crosses the membrane as a helical span at residues 253–273 (MNTYYSLAACTLATFGFSALL). Topologically, residues 274-283 (NGEGKLDMVH) are cytoplasmic. A helical membrane pass occupies residues 284–304 (IQNAALAGGVAVGTSGEMMLT). Residue Pro-305 is a topological domain, extracellular. The helical transmembrane segment at 306–326 (FGAMIAGTLAGMISVLGYKYL) threads the bilayer. Over 327–347 (TPVLDSKLKIQDTCGVHNLHG) the chain is Cytoplasmic. Residues 348–368 (MPGILGAIIGAIVALFATADI) form a helical membrane-spanning segment. Residues 369-394 (YGDGMGDVFPLISDGSRTAKQQSLYQ) lie on the Extracellular side of the membrane. A helical transmembrane segment spans residues 395–415 (FLALLVALGFAIIGGTVVGFI). The Cytoplasmic portion of the chain corresponds to 416–460 (LKLPIFGTPSDAECFEDAIYWEVPGGEGHQQLTVVINNEDPDTQA).

Belongs to the ammonium transporter (TC 2.A.49) family. Rh subfamily.

It is found in the basolateral cell membrane. The protein resides in the cytoplasmic vesicle membrane. Functions as a specific ammonium transporter. The chain is Ammonium transporter Rh type B-B (rhbg-b) from Xenopus laevis (African clawed frog).